The chain runs to 145 residues: Hemoglobin subunit beta (145 aa).

One can recognise a Globin domain in the interval 1–145; it reads MLTAEEKAAV…VANALAHRYH (145 aa). Thr-11 bears the Phosphothreonine mark. Ser-43 carries the post-translational modification Phosphoserine. Lys-58 carries the N6-acetyllysine modification. A heme b-binding site is contributed by His-62. At Lys-81 the chain carries N6-acetyllysine. Residue His-91 participates in heme b binding. At Cys-92 the chain carries S-nitrosocysteine.

It belongs to the globin family. In terms of assembly, heterotetramer of two alpha chains and two beta chains. Red blood cells.

Functionally, involved in oxygen transport from the lung to the various peripheral tissues. The chain is Hemoglobin subunit beta (HBB) from Bos gaurus frontalis (Domestic gayal).